We begin with the raw amino-acid sequence, 390 residues long: 8-amino-7-oxononanoate synthase (390 aa).

Arg19 provides a ligand contact to substrate. 106–107 is a pyridoxal 5'-phosphate binding site; sequence GY. His131 lines the substrate pocket. Residues Ser176, His204, and Thr233 each coordinate pyridoxal 5'-phosphate. Lys236 is subject to N6-(pyridoxal phosphate)lysine. Thr350 contributes to the substrate binding site.

This sequence belongs to the class-II pyridoxal-phosphate-dependent aminotransferase family. BioF subfamily. In terms of assembly, homodimer. The cofactor is pyridoxal 5'-phosphate.

The enzyme catalyses 6-carboxyhexanoyl-[ACP] + L-alanine + H(+) = (8S)-8-amino-7-oxononanoate + holo-[ACP] + CO2. It functions in the pathway cofactor biosynthesis; biotin biosynthesis. Its function is as follows. Catalyzes the decarboxylative condensation of pimeloyl-[acyl-carrier protein] and L-alanine to produce 8-amino-7-oxononanoate (AON), [acyl-carrier protein], and carbon dioxide. The protein is 8-amino-7-oxononanoate synthase of Pseudomonas putida (strain W619).